A 227-amino-acid chain; its full sequence is MMVAHTAQQLDLREKLLTNGVHSLSDIELLAVFISSGNNKKSCLQLAYELTKHLGNLRNILNADLQSFKSIHGLGEVRYAQLQAAKEICHRSDFIDLQKEIRLSNTQQTYAFLKKRLRDYKNETFAALFLDNQHRIIAYEELFSGTINTATVYPRPIVERVLQLNAAALILAHNHPSGLSDASQQDLAITERIRDALDLVDARLLDHIVIGDNEVYSIFAENKWACN.

An MPN domain is found at 102-225 (RLSNTQQTYA…YSIFAENKWA (124 aa)). Zn(2+) is bound by residues His173, His175, and Asp186. Residues 173–186 (HNHPSGLSDASQQD) carry the JAMM motif motif.

This sequence belongs to the UPF0758 family.

In Legionella pneumophila (strain Lens), this protein is UPF0758 protein lpl2409.